A 456-amino-acid chain; its full sequence is Histidine--tRNA ligase (456 aa).

The protein belongs to the class-II aminoacyl-tRNA synthetase family. As to quaternary structure, homodimer.

It is found in the cytoplasm. The enzyme catalyses tRNA(His) + L-histidine + ATP = L-histidyl-tRNA(His) + AMP + diphosphate + H(+). This Borreliella afzelii (strain PKo) (Borrelia afzelii) protein is Histidine--tRNA ligase.